The chain runs to 165 residues: UPF0114 protein in repA1-repA2 intergenic region (165 aa).

The next 3 membrane-spanning stretches (helical) occupy residues 10 to 32 (YASRWLMFPVYIGLSFGFILLTL), 53 to 75 (LILIVLSLIDIALVGGLLVMVMF), and 136 to 155 (IMWCVIIHLTFVLSAFGMAC).

This sequence belongs to the UPF0114 family.

The protein resides in the cell membrane. The protein is UPF0114 protein in repA1-repA2 intergenic region of Buchnera aphidicola subsp. Geoica urticularia.